A 188-amino-acid chain; its full sequence is Transcription factor E (188 aa).

Residues 9-98 (DLEVLRDVTL…SWRLNLREVL (90 aa)) form the HTH TFE/IIEalpha-type domain.

Belongs to the TFE family. Monomer. Interaction with RNA polymerase subunits RpoF and RpoE is necessary for Tfe stimulatory transcription activity. Able to interact with Tbp and RNA polymerase in the absence of DNA promoter. Interacts both with the preinitiation and elongation complexes.

Functionally, transcription factor that plays a role in the activation of archaeal genes transcribed by RNA polymerase. Facilitates transcription initiation by enhancing TATA-box recognition by TATA-box-binding protein (Tbp), and transcription factor B (Tfb) and RNA polymerase recruitment. Not absolutely required for transcription in vitro, but particularly important in cases where Tbp or Tfb function is not optimal. It dynamically alters the nucleic acid-binding properties of RNA polymerases by stabilizing the initiation complex and destabilizing elongation complexes. Seems to translocate with the RNA polymerase following initiation and acts by binding to the non template strand of the transcription bubble in elongation complexes. This chain is Transcription factor E, found in Methanopyrus kandleri (strain AV19 / DSM 6324 / JCM 9639 / NBRC 100938).